Here is a 405-residue protein sequence, read N- to C-terminus: Riboflavin biosynthesis protein RibBA (405 aa).

The segment at 1 to 205 is DHBP synthase; that stretch reads MEEIKLNTIE…IKDLIAYRLK (205 aa). D-ribulose 5-phosphate is bound by residues 30–31, Asp35, 144–148, and Glu168; these read RE and RAGHT. Glu31 provides a ligand contact to Mg(2+). His147 is a binding site for Mg(2+). Positions 206–405 are GTP cyclohydrolase II; sequence QESIVEKGVE…RMGHELHNIK (200 aa). Residue 256 to 260 participates in GTP binding; the sequence is RMHSS. Zn(2+) contacts are provided by Cys261, Cys272, and Cys274. GTP is bound by residues Gln277, 299-301, and Thr321; that span reads EGR. Catalysis depends on Asp333, which acts as the Proton acceptor; for GTP cyclohydrolase activity. The active-site Nucleophile; for GTP cyclohydrolase activity is Arg335. Residues Thr356 and Lys361 each contribute to the GTP site.

In the N-terminal section; belongs to the DHBP synthase family. It in the C-terminal section; belongs to the GTP cyclohydrolase II family. Mg(2+) is required as a cofactor. Requires Mn(2+) as cofactor. The cofactor is Zn(2+).

The catalysed reaction is D-ribulose 5-phosphate = (2S)-2-hydroxy-3-oxobutyl phosphate + formate + H(+). The enzyme catalyses GTP + 4 H2O = 2,5-diamino-6-hydroxy-4-(5-phosphoribosylamino)-pyrimidine + formate + 2 phosphate + 3 H(+). It participates in cofactor biosynthesis; riboflavin biosynthesis; 2-hydroxy-3-oxobutyl phosphate from D-ribulose 5-phosphate: step 1/1. Its pathway is cofactor biosynthesis; riboflavin biosynthesis; 5-amino-6-(D-ribitylamino)uracil from GTP: step 1/4. In terms of biological role, catalyzes the conversion of D-ribulose 5-phosphate to formate and 3,4-dihydroxy-2-butanone 4-phosphate. Its function is as follows. Catalyzes the conversion of GTP to 2,5-diamino-6-ribosylamino-4(3H)-pyrimidinone 5'-phosphate (DARP), formate and pyrophosphate. The sequence is that of Riboflavin biosynthesis protein RibBA from Porphyromonas gingivalis (strain ATCC 33277 / DSM 20709 / CIP 103683 / JCM 12257 / NCTC 11834 / 2561).